A 372-amino-acid chain; its full sequence is Cytochrome b (372 aa).

Helical transmembrane passes span 25–45, 69–90, 105–125, and 170–190; these read FGSM…FLAI, WIIQ…YTHI, WLSG…GYVL, and FFAL…IHII. Heme b is bound by residues His-75 and His-89. Positions 174 and 188 each coordinate heme b. His-193 contributes to the a ubiquinone binding site. Transmembrane regions (helical) follow at residues 218-238, 280-300, 312-332, and 339-358; these read YKDT…MSFM, LGGT…PFTH, LTQI…WSAT, and FIFI…IINP.

The protein belongs to the cytochrome b family. As to quaternary structure, the cytochrome bc1 complex contains 3 respiratory subunits (MT-CYB, CYC1 and UQCRFS1), 2 core proteins (UQCRC1 and UQCRC2) and probably 6 low-molecular weight proteins. It depends on heme b as a cofactor.

Its subcellular location is the mitochondrion inner membrane. Component of the ubiquinol-cytochrome c reductase complex (complex III or cytochrome b-c1 complex) that is part of the mitochondrial respiratory chain. The b-c1 complex mediates electron transfer from ubiquinol to cytochrome c. Contributes to the generation of a proton gradient across the mitochondrial membrane that is then used for ATP synthesis. In Hydrophis semperi (Lake Taal snake), this protein is Cytochrome b (MT-CYB).